The primary structure comprises 201 residues: Thymidine kinase (201 aa).

ATP contacts are provided by residues 9–16 (SAMNAGKS) and 87–90 (DECH). Glutamate 88 acts as the Proton acceptor in catalysis. Zn(2+) is bound by residues cysteine 145, cysteine 147, cysteine 182, and histidine 185.

It belongs to the thymidine kinase family. As to quaternary structure, homotetramer.

It localises to the cytoplasm. The catalysed reaction is thymidine + ATP = dTMP + ADP + H(+). This is Thymidine kinase from Photorhabdus laumondii subsp. laumondii (strain DSM 15139 / CIP 105565 / TT01) (Photorhabdus luminescens subsp. laumondii).